Reading from the N-terminus, the 301-residue chain is Acetyl-coenzyme A carboxylase carboxyl transferase subunit beta (301 aa).

The CoA carboxyltransferase N-terminal domain maps to 25 to 294 (LWIKDPSTGE…NSDAPAPQKP (270 aa)).

The protein belongs to the AccD/PCCB family. In terms of assembly, acetyl-CoA carboxylase is a heterohexamer composed of biotin carboxyl carrier protein (AccB), biotin carboxylase (AccC) and two subunits each of ACCase subunit alpha (AccA) and ACCase subunit beta (AccD).

It is found in the cytoplasm. The catalysed reaction is N(6)-carboxybiotinyl-L-lysyl-[protein] + acetyl-CoA = N(6)-biotinyl-L-lysyl-[protein] + malonyl-CoA. Its pathway is lipid metabolism; malonyl-CoA biosynthesis; malonyl-CoA from acetyl-CoA: step 1/1. Functionally, component of the acetyl coenzyme A carboxylase (ACC) complex. Biotin carboxylase (BC) catalyzes the carboxylation of biotin on its carrier protein (BCCP) and then the CO(2) group is transferred by the transcarboxylase to acetyl-CoA to form malonyl-CoA. This Brucella abortus (strain 2308) protein is Acetyl-coenzyme A carboxylase carboxyl transferase subunit beta.